The chain runs to 307 residues: Phosphate import ATP-binding protein PstB (307 aa).

The segment at 1 to 30 (MSETTYTTTEDTDDTNSTDSMVGTTTGETD) is disordered. An ABC transporter domain is found at 48–302 (LGVDDLDVYY…PQSERVEDYI (255 aa)). Position 80-87 (80-87 (GPSGCGKS)) interacts with ATP.

It belongs to the ABC transporter superfamily. Phosphate importer (TC 3.A.1.7) family. The complex is composed of two ATP-binding proteins (PstB), two transmembrane proteins (PstC and PstA) and a solute-binding protein (PstS).

The protein resides in the cell membrane. It carries out the reaction phosphate(out) + ATP + H2O = ADP + 2 phosphate(in) + H(+). Part of the ABC transporter complex PstSACB involved in phosphate import. Responsible for energy coupling to the transport system. This Haloquadratum walsbyi (strain DSM 16790 / HBSQ001) protein is Phosphate import ATP-binding protein PstB.